Here is a 449-residue protein sequence, read N- to C-terminus: Glycosyl hydrolase-like protein 1 (449 aa).

A beta-D-glucoside-binding positions include Q22, H119, 164 to 165 (NE), Y292, E350, W393, and Y406. The active-site Proton donor is E165. E350 (nucleophile) is an active-site residue.

Belongs to the glycosyl hydrolase 1 family. Mainly expressed in flowers, flower buds and young leaves, and, to a lesser extent, in old leaves, stems and roots.

Its subcellular location is the cytoplasm. It functions in the pathway secondary metabolite biosynthesis; terpenoid biosynthesis. In terms of biological role, component of the oleanane-type triterpene saponins (e.g. saponarioside A and saponarioside B) biosynthetic pathway, leading to the production of natural products with detergent properties used as traditional sources of soap. Beta-glycosidase that catalyzes the transfer of glucose moiety to QA-triFRXX to produce QA-triF(Q)RXX via the elongation of the C-28 sugar chain with a D-quinovose. This is Glycosyl hydrolase-like protein 1 from Saponaria officinalis (Common soapwort).